A 450-amino-acid polypeptide reads, in one-letter code: Nicotinamide phosphoribosyltransferase (450 aa).

Position 210 (Arg210) interacts with diphosphate. Residue Asp233 coordinates beta-nicotinamide D-ribonucleotide. Diphosphate contacts are provided by His249 and Arg310. Beta-nicotinamide D-ribonucleotide is bound by residues 310–312 (RAD), 364–365 (GD), and Arg403.

The protein belongs to the NAPRTase family.

It catalyses the reaction beta-nicotinamide D-ribonucleotide + diphosphate = 5-phospho-alpha-D-ribose 1-diphosphate + nicotinamide + H(+). It participates in cofactor biosynthesis; NAD(+) biosynthesis; nicotinamide D-ribonucleotide from 5-phospho-alpha-D-ribose 1-diphosphate and nicotinamide: step 1/1. Functionally, catalyzes the condensation of nicotinamide with 5-phosphoribosyl-1-pyrophosphate to yield nicotinamide mononucleotide, an intermediate in the biosynthesis of NAD. This chain is Nicotinamide phosphoribosyltransferase, found in Mycoplasma genitalium (strain ATCC 33530 / DSM 19775 / NCTC 10195 / G37) (Mycoplasmoides genitalium).